The chain runs to 76 residues: MSYFAFFYGYYNQITFRLQYHHQYVTLPYSTLNFALSLVEKNYMLFFYLYMHIFIEKHNQYFFYWYNPSNQTYKSK.

This is an uncharacterized protein from Saccharomyces cerevisiae (strain ATCC 204508 / S288c) (Baker's yeast).